We begin with the raw amino-acid sequence, 306 residues long: Ribonuclease Z (306 aa).

Zn(2+) is bound by residues histidine 63, histidine 65, aspartate 67, histidine 68, histidine 141, aspartate 211, and histidine 269. Aspartate 67 serves as the catalytic Proton acceptor.

Belongs to the RNase Z family. Homodimer. Zn(2+) serves as cofactor.

It carries out the reaction Endonucleolytic cleavage of RNA, removing extra 3' nucleotides from tRNA precursor, generating 3' termini of tRNAs. A 3'-hydroxy group is left at the tRNA terminus and a 5'-phosphoryl group is left at the trailer molecule.. Its function is as follows. Zinc phosphodiesterase, which displays some tRNA 3'-processing endonuclease activity. Probably involved in tRNA maturation, by removing a 3'-trailer from precursor tRNA. This Staphylococcus epidermidis (strain ATCC 35984 / DSM 28319 / BCRC 17069 / CCUG 31568 / BM 3577 / RP62A) protein is Ribonuclease Z.